Reading from the N-terminus, the 212-residue chain is Nitrogen regulatory protein P-II homolog (212 aa).

Low complexity-rich tracts occupy residues 1-12, 32-46, and 63-74; these read MSSPATAAAAAA, TTTTTSRLLLASRSR, and PPTAARAQSAAA. A chloroplast-targeting transit peptide spans 1 to 68; it reads MSSPATAAAA…PRRLPPTAAR (68 aa). Residues 1-74 form a disordered region; that stretch reads MSSPATAAAA…TAARAQSAAA (74 aa). ATP is bound by residues 117–121 and 170–173; these read GFGAQ and GDGK. Glycine 119 serves as a coordination point for Mg(2+).

It belongs to the P(II) protein family. Homodimer.

It is found in the plastid. The protein localises to the chloroplast. Its function is as follows. Participates in sensing carbon and organic nitrogen status and regulates some steps of primary carbon and nitrogen metabolism. The protein is Nitrogen regulatory protein P-II homolog (GLB) of Oryza sativa subsp. japonica (Rice).